Here is an 84-residue protein sequence, read N- to C-terminus: Small ribosomal subunit protein uS17 (84 aa).

Belongs to the universal ribosomal protein uS17 family. Part of the 30S ribosomal subunit.

Its function is as follows. One of the primary rRNA binding proteins, it binds specifically to the 5'-end of 16S ribosomal RNA. The protein is Small ribosomal subunit protein uS17 of Clostridium botulinum (strain Alaska E43 / Type E3).